The primary structure comprises 113 residues: U11-theraphotoxin-Hhn1a (113 aa).

A signal peptide spans 1-21 (MNTVRATFLLVFVLAVSLGQA). A propeptide spanning residues 22 to 74 (DKDENRMEMQEKTEQGKSYLDFAENLLLQKLEELEAKLLEEDSEESRNSRQKR) is cleaved from the precursor. Over residues 60 to 69 (LEEDSEESRN) the composition is skewed to basic and acidic residues. Positions 60–82 (LEEDSEESRNSRQKRCIGEGVPC) are disordered. 3 disulfides stabilise this stretch: cysteine 75–cysteine 90, cysteine 82–cysteine 95, and cysteine 89–cysteine 110.

Belongs to the neurotoxin 14 (magi-1) family. 01 (HNTX-16) subfamily. In terms of tissue distribution, expressed by the venom gland.

It localises to the secreted. In terms of biological role, probable ion channel inhibitor. The chain is U11-theraphotoxin-Hhn1a from Cyriopagopus hainanus (Chinese bird spider).